The sequence spans 460 residues: UDP-N-acetylmuramoylalanine--D-glutamate ligase (460 aa).

Residue 120–126 (GSNGKTT) participates in ATP binding.

It belongs to the MurCDEF family.

Its subcellular location is the cytoplasm. The catalysed reaction is UDP-N-acetyl-alpha-D-muramoyl-L-alanine + D-glutamate + ATP = UDP-N-acetyl-alpha-D-muramoyl-L-alanyl-D-glutamate + ADP + phosphate + H(+). It functions in the pathway cell wall biogenesis; peptidoglycan biosynthesis. In terms of biological role, cell wall formation. Catalyzes the addition of glutamate to the nucleotide precursor UDP-N-acetylmuramoyl-L-alanine (UMA). The polypeptide is UDP-N-acetylmuramoylalanine--D-glutamate ligase (Lactobacillus delbrueckii subsp. bulgaricus (strain ATCC BAA-365 / Lb-18)).